The chain runs to 620 residues: 1-deoxy-D-xylulose-5-phosphate synthase (620 aa).

Residues His80 and Gly121–Ser123 each bind thiamine diphosphate. Mg(2+) is bound at residue Asp152. Thiamine diphosphate contacts are provided by residues Gly153–Ala154, Asn181, Tyr288, and Glu370. Residue Asn181 participates in Mg(2+) binding.

The protein belongs to the transketolase family. DXPS subfamily. Homodimer. It depends on Mg(2+) as a cofactor. The cofactor is thiamine diphosphate.

The catalysed reaction is D-glyceraldehyde 3-phosphate + pyruvate + H(+) = 1-deoxy-D-xylulose 5-phosphate + CO2. It participates in metabolic intermediate biosynthesis; 1-deoxy-D-xylulose 5-phosphate biosynthesis; 1-deoxy-D-xylulose 5-phosphate from D-glyceraldehyde 3-phosphate and pyruvate: step 1/1. Catalyzes the acyloin condensation reaction between C atoms 2 and 3 of pyruvate and glyceraldehyde 3-phosphate to yield 1-deoxy-D-xylulose-5-phosphate (DXP). This is 1-deoxy-D-xylulose-5-phosphate synthase from Pseudoalteromonas translucida (strain TAC 125).